The primary structure comprises 462 residues: Flavin-containing monooxygenase FMO GS-OX3 (462 aa).

17-22 serves as a coordination point for FAD; it reads GAGPAG. 212 to 217 contributes to the NADP(+) binding site; the sequence is GNFASG. The chain crosses the membrane as a helical span at residues 318–338; it reads ALAPGLAFVGLPAMGIVFVMF.

It belongs to the FMO family.

It is found in the membrane. It carries out the reaction a (Z)-omega-(methylsulfanyl)-N-sulfo-alkylhydroximate S-glucoside + NADPH + O2 + H(+) = a (Z)-omega-(methylsulfinyl)-alkyl-glucosinolate + NADP(+) + H2O. Functionally, catalyzes the conversion of methylthioalkyl glucosinolates of any chain length into methylsulfinylalkyl glucosinolates. Prefers probably short-chain methylthioalkyl glucosinolates in cv. Landsberg erecta. The sequence is that of Flavin-containing monooxygenase FMO GS-OX3 (FMOGS-OX3) from Arabidopsis thaliana (Mouse-ear cress).